The following is a 1002-amino-acid chain: Vacuolar protein sorting-associated protein 18 homolog (1002 aa).

Position 344 is a phosphoserine (Ser344). One copy of the CHCR repeat lies at 650 to 804; that stretch reads LMAQGSRLEV…DIKGTNDVKK (155 aa). Positions 827–880 form a coiled coil; that stretch reads FEKIDNFKEAICDALRDYNQRIQELQREMAETTEQTDRVTAELQQLRQHSLTVE. An RING-type; degenerate zinc finger spans residues 885–924; sequence CEICEMMLLVKPFFIFICGHKFHSDCLEKHVVPLLTKEQC.

It belongs to the VPS18 family. As to quaternary structure, component of the class C core vacuole/endosome tethering (CORVET) complex composed of at least Vps8, dor/Vps18, car/Vps33A and Vps16A; unlike in other species, Vps11 is not part of the Drosophila complex. Due to the reduced number of components the Drosophila CORVET complex is often referred to as the miniCORVET complex. Interacts with car/Vps33A. Interacts with ema. Component of the homotypic fusion and vacuole protein sorting (HOPS) complex, composed of Vps16A, car/Vps33A, dor/Vps18, Vps39, Vps11 and lt/Vps41. The tethering complex core made up of Vps16A, car/Vps33A and dor/Vps18 and shared by both HOPS and CORVET, preferentially associates with CORVET-specific Vps8 over HOPS-specific lt/Vps41. Interacts with Syx17 (via SNARE domain); the interaction may involve multiple components of the HOPS complex and may promote assembly of the Syx17-Snap29-Vamp7 trans-SNARE complex.

It localises to the early endosome. The protein resides in the late endosome membrane. The protein localises to the lysosome membrane. It is found in the cytoplasmic vesicle. Its subcellular location is the autophagosome. In terms of biological role, core component of the class C core vacuole/endosome tethering (CORVET) and the homotypic fusion and vacuole protein sorting (HOPS) tethering complexes involved in endo-lysosomal vesicle trafficking and lysosome biogenesis. The CORVET complex facilitates docking and fusion of endosomal vesicles during endosome maturation, acts upstream of HOPS, but is not involved in autophagic flux. The CORVET complex may cooperate with the early endosomal tether Rbsn-5 to mediate endosomal fusion. The HOPS complex facilitates docking and fusion of lysosomes with late endosomes and several other types of vesicles. The HOPS complex is also involved in autophagy and crinophagy (the elimination of unused secretory granules through their fusion with lysosomes). The HOPS complex mediates autophagocitic flux, probably by binding autophagosome-associated Syx17/syntaxin 17, promoting assembly of the trans-SNARE complex and instigating autophagosome-lysosome fusion. Independent of Syx17/syntaxin 17, HOPS is involved in biosynthetic transport to lysosomes and lysosome-related organelles such as eye-pigment granules. Required for endocytic degradation of boss/bride of sevenless and N/Notch in developing ommatidia. Required for autophagocytosis-dependent remodeling of myofibrils and transverse-tubules (T-tubules) during metamorphosis. In larval neuromuscular junctions, essential for endosomal sorting that traffics old or dysfunctional synaptic vesicle proteins through a degradative endolysosomal route. Required to maintain normal levels of rush, which functions in endosome formation and trafficking. The protein is Vacuolar protein sorting-associated protein 18 homolog of Drosophila melanogaster (Fruit fly).